The sequence spans 581 residues: Arginine--tRNA ligase (581 aa).

The short motif at 126–136 is the 'HIGH' region element; the sequence is PNLAKEMHVGH.

It belongs to the class-I aminoacyl-tRNA synthetase family. In terms of assembly, monomer.

It is found in the cytoplasm. It carries out the reaction tRNA(Arg) + L-arginine + ATP = L-arginyl-tRNA(Arg) + AMP + diphosphate. The polypeptide is Arginine--tRNA ligase (Shewanella sediminis (strain HAW-EB3)).